Consider the following 183-residue polypeptide: Large ribosomal subunit protein bL32m (183 aa).

A mitochondrion-targeting transit peptide spans 1–71; the sequence is MNSLIFGKQL…DFFSNNGILL (71 aa). Zn(2+) is bound by residues Cys-104, Cys-107, Cys-117, and Cys-120.

Belongs to the bacterial ribosomal protein bL32 family. As to quaternary structure, component of the mitochondrial large ribosomal subunit (mt-LSU). Mature yeast 74S mitochondrial ribosomes consist of a small (37S) and a large (54S) subunit. The 37S small subunit contains a 15S ribosomal RNA (15S mt-rRNA) and 34 different proteins. The 54S large subunit contains a 21S rRNA (21S mt-rRNA) and 46 different proteins. bL32m has a zinc binding site. MRPL32 precursor is processed by the m-AAA protease (composed of YTA12/RCA1 and YTA10/AFG3), which cleaves the N-terminal transit peptide. Cleavage by the m-AAA protease takes place prior to assembly into the large subunit, an essential step for mitochondrial ribosome (mitoribosome) assembly. Proper processing by the m-AAA protease is dependent on the zinc-binding region within the tightly folded C-terminal domain of MRPL32: zinc-dependent folding halts degradation initiated from the N-terminus and triggers the release of mature MRPL32.

It is found in the mitochondrion. Functionally, component of the mitochondrial ribosome (mitoribosome), a dedicated translation machinery responsible for the synthesis of mitochondrial genome-encoded proteins, including at least some of the essential transmembrane subunits of the mitochondrial respiratory chain. The mitoribosomes are attached to the mitochondrial inner membrane and translation products are cotranslationally integrated into the membrane. The sequence is that of Large ribosomal subunit protein bL32m from Saccharomyces cerevisiae (strain ATCC 204508 / S288c) (Baker's yeast).